We begin with the raw amino-acid sequence, 644 residues long: Phosphatidylinositol polyphosphate 5-phosphatase type IV (644 aa).

Residues 1–193 (MPSKAENLRP…RLPSLLPPRP (193 aa)) form a disordered region. Tandem repeats lie at residues 10 to 13 (PSEP), 15 to 18 (PQPP), 28 to 31 (PGAP), 39 to 42 (PPDA), 55 to 58 (PATP), 69 to 71 (PIA), 72 to 74 (PRP), and 75 to 78 (PARP). The tract at residues 10–242 (PSEPAPQPPE…SLGPGRPRSP (233 aa)) is 13 X 4 AA repeats of P-X-X-P. The span at 78–90 (PRLERALSLDDKG) shows a compositional bias: basic and acidic residues. Phosphoserine is present on Ser-99. The segment covering 107 to 118 (NGTSPSRGSVQS) has biased composition (polar residues). Copy 9 of the repeat occupies 121-124 (PGAP). A compositionally biased stretch (low complexity) spans 152-163 (GSPSSGGNPLSG). 4 consecutive repeat copies span residues 169–172 (PNLP), 183–185 (PRL), 190–193 (PPRP), and 236–239 (PGRP). Residues Ser-241 and Ser-256 each carry the phosphoserine modification. At Cys-641 the chain carries Cysteine methyl ester. A lipid anchor (S-farnesyl cysteine) is attached at Cys-641. Residues 642 to 644 (SVS) constitute a propeptide, removed in mature form.

The protein belongs to the inositol 1,4,5-trisphosphate 5-phosphatase type IV family. As to quaternary structure, interacts (when prenylated) with PDE6D; this is important for normal location in cilia. As to expression, detected in brain, heart, pancreas, testis and spleen.

The protein resides in the cytoplasm. It localises to the cytoskeleton. The protein localises to the cilium axoneme. Its subcellular location is the golgi apparatus. It is found in the golgi stack membrane. The protein resides in the cell membrane. It localises to the cell projection. The protein localises to the ruffle. Its subcellular location is the nucleus. The enzyme catalyses a 1,2-diacyl-sn-glycero-3-phospho-(1D-myo-inositol-4,5-bisphosphate) + H2O = a 1,2-diacyl-sn-glycero-3-phospho-(1D-myo-inositol 4-phosphate) + phosphate. It catalyses the reaction a 1,2-diacyl-sn-glycero-3-phospho-(1D-myo-inositol-3,4,5-trisphosphate) + H2O = a 1,2-diacyl-sn-glycero-3-phospho-(1D-myo-inositol-3,4-bisphosphate) + phosphate. It carries out the reaction a 1,2-diacyl-sn-glycero-3-phospho-(1D-myo-inositol-3,5-bisphosphate) + H2O = a 1,2-diacyl-sn-glycero-3-phospho-(1D-myo-inositol-3-phosphate) + phosphate. With respect to regulation, active in the presence of octyl-glucoside or Triton X-100, but completely inhibited by CTAB. In terms of biological role, phosphatidylinositol (PtdIns) phosphatase that specifically hydrolyzes the 5-phosphate of phosphatidylinositol-3,4,5-trisphosphate (PtdIns(3,4,5)P3), phosphatidylinositol 4,5-bisphosphate (PtdIns(4,5)P2) and phosphatidylinositol 3,5-bisphosphate (PtdIns(3,5)P2). Specific for lipid substrates, inactive towards water soluble inositol phosphates. Plays an essential role in the primary cilium by controlling ciliary growth and phosphoinositide 3-kinase (PI3K) signaling and stability. The polypeptide is Phosphatidylinositol polyphosphate 5-phosphatase type IV (INPP5E) (Homo sapiens (Human)).